Here is a 1879-residue protein sequence, read N- to C-terminus: Protein TIC 214 (1879 aa).

6 helical membrane passes run 18-38 (IINS…FSIG), 67-87 (FITG…HLAL), 90-110 (PHTI…WNNH), 127-147 (LSIQ…HFIL), 175-195 (VGWL…LVWI), and 218-238 (IFSI…PSPI). The disordered stretch occupies residues 243 to 291 (LKETEERGESEEERDVEKTSETKGTKQEQEGSTEEDPSPSLFSEEKEDP). A compositionally biased stretch (basic and acidic residues) spans 257–271 (DVEKTSETKGTKQEQ).

The protein belongs to the TIC214 family. Part of the Tic complex.

The protein localises to the plastid. Its subcellular location is the chloroplast inner membrane. Functionally, involved in protein precursor import into chloroplasts. May be part of an intermediate translocation complex acting as a protein-conducting channel at the inner envelope. The sequence is that of Protein TIC 214 from Morus indica (Mulberry).